A 318-amino-acid polypeptide reads, in one-letter code: Ferrochelatase (318 aa).

Residues His-186 and Glu-264 each coordinate Fe cation.

This sequence belongs to the ferrochelatase family.

It localises to the cytoplasm. It catalyses the reaction heme b + 2 H(+) = protoporphyrin IX + Fe(2+). Its pathway is porphyrin-containing compound metabolism; protoheme biosynthesis; protoheme from protoporphyrin-IX: step 1/1. Functionally, catalyzes the ferrous insertion into protoporphyrin IX. The sequence is that of Ferrochelatase from Chlamydia caviae (strain ATCC VR-813 / DSM 19441 / 03DC25 / GPIC) (Chlamydophila caviae).